The primary structure comprises 238 residues: U2 small nuclear ribonucleoprotein A' (238 aa).

3 LRR repeats span residues 53–74, 75–95, and 97–118; these read PTHI…SRRD, DIHT…RLLP, and NVQN…QRLR. One can recognise an LRRCT domain in the interval 132 to 170; sequence NQVCHLANYREHVLRLVPHLETLDFQNVTAEERKSAMSF. The disordered stretch occupies residues 167–189; it reads AMSFPRQADGDTLGPVNTAIRDN.

This sequence belongs to the U2 small nuclear ribonucleoprotein A family. In terms of assembly, belongs to the CWC complex (or CEF1-associated complex), a spliceosome sub-complex reminiscent of a late-stage spliceosome composed of the U2, U5 and U6 snRNAs and at least BUD13, BUD31, BRR2, CDC40, CEF1, CLF1, CUS1, CWC2, CWC15, CWC21, CWC22, CWC23, CWC24, CWC25, CWC27, ECM2, HSH155, IST3, ISY1, LEA1, MSL1, NTC20, PRP8, PRP9, PRP11, PRP19, PRP21, PRP22, PRP45, PRP46, SLU7, SMB1, SMD1, SMD2, SMD3, SMX2, SMX3, SNT309, SNU114, SPP2, SYF1, SYF2, RSE1 and YJU2. Interacts with MSL1.

It is found in the nucleus. Its function is as follows. Involved in pre-mRNA splicing. Associates to U2 snRNA in a MSL1 dependent manner and is required for normal accumulation of U2 snRNA. Required for the spliceosome assembly and the efficient addition of U2 snRNP onto the pre-mRNA. The protein is U2 small nuclear ribonucleoprotein A' (LEA1) of Saccharomyces cerevisiae (strain ATCC 204508 / S288c) (Baker's yeast).